The primary structure comprises 1203 residues: DNA-directed RNA polymerase subunit beta' (1203 aa).

4 residues coordinate Zn(2+): Cys60, Cys62, Cys75, and Cys78. Asp449, Asp451, and Asp453 together coordinate Mg(2+). Residues Cys818, Cys892, Cys899, and Cys902 each contribute to the Zn(2+) site.

Belongs to the RNA polymerase beta' chain family. In terms of assembly, the RNAP catalytic core consists of 2 alpha, 1 beta, 1 beta' and 1 omega subunit. When a sigma factor is associated with the core the holoenzyme is formed, which can initiate transcription. Mg(2+) is required as a cofactor. Zn(2+) serves as cofactor.

The catalysed reaction is RNA(n) + a ribonucleoside 5'-triphosphate = RNA(n+1) + diphosphate. Its function is as follows. DNA-dependent RNA polymerase catalyzes the transcription of DNA into RNA using the four ribonucleoside triphosphates as substrates. The chain is DNA-directed RNA polymerase subunit beta' from Bacillus anthracis.